Here is a 235-residue protein sequence, read N- to C-terminus: Ubiquinone biosynthesis O-methyltransferase (235 aa).

Residues Arg-40, Gly-60, Asp-81, and Met-125 each coordinate S-adenosyl-L-methionine.

The protein belongs to the methyltransferase superfamily. UbiG/COQ3 family.

It catalyses the reaction a 3-demethylubiquinol + S-adenosyl-L-methionine = a ubiquinol + S-adenosyl-L-homocysteine + H(+). The enzyme catalyses a 3-(all-trans-polyprenyl)benzene-1,2-diol + S-adenosyl-L-methionine = a 2-methoxy-6-(all-trans-polyprenyl)phenol + S-adenosyl-L-homocysteine + H(+). The protein operates within cofactor biosynthesis; ubiquinone biosynthesis. Functionally, O-methyltransferase that catalyzes the 2 O-methylation steps in the ubiquinone biosynthetic pathway. The protein is Ubiquinone biosynthesis O-methyltransferase of Nitrosomonas europaea (strain ATCC 19718 / CIP 103999 / KCTC 2705 / NBRC 14298).